Reading from the N-terminus, the 214-residue chain is Calcineurin B homologous protein 3 (214 aa).

G2 is lipidated: N-myristoyl glycine. Positions 110–145 (CRKDKLRFLFNMYDTDNDSKITLEEYRKVVEELLSG) constitute an EF-hand domain. D123, D125, D127, K129, and E134 together coordinate Ca(2+).

The protein belongs to the calcineurin regulatory subunit family. CHP subfamily. As to quaternary structure, monomer. Homodimer.

It localises to the nucleus. It is found in the cytoplasm. The protein resides in the membrane. The protein localises to the cell membrane. Its subcellular location is the cell projection. It localises to the lamellipodium. It is found in the ruffle membrane. In terms of biological role, functions as an integral cofactor in cell pH regulation by controlling plasma membrane-type Na(+)/H(+) exchange activity. Promotes the induction of hematopoietic stem cell differentiation toward megakaryocytic lineage. Essential for the coupling of ERK cascade activation with the expression of ETS family genes in megakaryocytic differentiation. Also involved in granulocytic differentiation in a ERK-dependent manner. Inhibits the phosphatase activity of calcineurin. In Xenopus tropicalis (Western clawed frog), this protein is Calcineurin B homologous protein 3 (tesc).